A 118-amino-acid polypeptide reads, in one-letter code: uncharacterized protein (118 aa).

This is an uncharacterized protein from Clostridium perfringens.